Here is a 356-residue protein sequence, read N- to C-terminus: S-adenosylmethionine:tRNA ribosyltransferase-isomerase (356 aa).

The protein belongs to the QueA family. In terms of assembly, monomer.

It is found in the cytoplasm. It carries out the reaction 7-aminomethyl-7-carbaguanosine(34) in tRNA + S-adenosyl-L-methionine = epoxyqueuosine(34) in tRNA + adenine + L-methionine + 2 H(+). It functions in the pathway tRNA modification; tRNA-queuosine biosynthesis. In terms of biological role, transfers and isomerizes the ribose moiety from AdoMet to the 7-aminomethyl group of 7-deazaguanine (preQ1-tRNA) to give epoxyqueuosine (oQ-tRNA). This is S-adenosylmethionine:tRNA ribosyltransferase-isomerase from Chromohalobacter salexigens (strain ATCC BAA-138 / DSM 3043 / CIP 106854 / NCIMB 13768 / 1H11).